A 1183-amino-acid polypeptide reads, in one-letter code: Atrophin-1 (1183 aa).

3 disordered regions span residues Met-1–Ser-603, Ser-617–Asn-760, and Leu-780–Pro-855. The Nuclear localization signal motif lies at Arg-16–Arg-32. Positions Lys-17 to Ser-29 are enriched in basic and acidic residues. Residue Ser-34 is modified to Phosphoserine. Positions Gly-45 to Ser-63 are enriched in basic and acidic residues. Residues Ser-77, Ser-79, Ser-100, Ser-102, and Ser-106 each carry the phosphoserine modification. Over residues Leu-107–Asn-127 the composition is skewed to basic and acidic residues. The span at Arg-128 to Ser-151 shows a compositional bias: polar residues. Composition is skewed to pro residues over residues Pro-157–Ser-173 and Gly-207–Gln-218. Low complexity predominate over residues Ile-261–Pro-272. The segment covering Pro-344–Arg-373 has biased composition (pro residues). Over residues Ser-377–Ser-400 the composition is skewed to low complexity. Residues Ser-415–Trp-436 show a composition bias toward polar residues. The interval His-510–Pro-560 is involved in binding BAIAP2. The span at Ser-562–Ser-584 shows a compositional bias: low complexity. Ser-625 bears the Phosphoserine mark. Lys-634 carries the N6-acetyllysine modification. Thr-646 bears the Phosphothreonine mark. At Ser-654 the chain carries Phosphoserine. Thr-662 is modified (phosphothreonine). 2 stretches are compositionally biased toward pro residues: residues Leu-701–Gly-711 and Ser-732–Lys-745. Ser-732 carries the phosphoserine; by MAPK8 modification. Residues Ser-739 and Ser-741 each carry the phosphoserine modification. Over residues Lys-788–Val-832 the composition is skewed to basic and acidic residues. The tract at residues Asp-872–Val-887 is required for interaction with FAT1. Phosphoserine is present on Ser-889. The interval Pro-921–Lys-940 is disordered. Residues Ala-922–Lys-940 are compositionally biased toward basic and acidic residues. Positions Ala-1026 to Arg-1034 match the Nuclear export signal motif. Arg-1108 carries the asymmetric dimethylarginine modification. Lys-1176 participates in a covalent cross-link: Glycyl lysine isopeptide (Lys-Gly) (interchain with G-Cter in SUMO2).

As to quaternary structure, interacts with NR2E1; the interaction represses the transcriptional activity of NR2E1. Interact (via its N-terminus) with FAT1 (via a C-terminal domain). Interacts with BAIAP2, WWP1, WWP2, WWP3 and RERE. Interacts (via its N-terminus) with MTG8; the interaction enhances transcriptional repression of MTG8. Interacts with PQBP1. In terms of processing, phosphorylated in vitro by MAPK8/JNK1 on Ser-732. Predominant neuronal expression, Expressed in most brain regions including striatum, hippocampus, cerebral cortex, diencephalon, brain stem and cerebellum. Highest levels in cerebellum. Also highly expressed in kidney and testis, low expression in skeletal muscle and heart.

The protein localises to the nucleus. Its subcellular location is the cytoplasm. It is found in the perinuclear region. The protein resides in the cell junction. Functionally, transcriptional corepressor. Recruits NR2E1 to repress transcription. Promotes vascular smooth cell (VSMC) migration and orientation. Corepressor of MTG8 transcriptional repression. Has some intrinsic repression activity. The sequence is that of Atrophin-1 (Atn1) from Rattus norvegicus (Rat).